Reading from the N-terminus, the 402-residue chain is Probable tRNA sulfurtransferase (402 aa).

Residues 61 to 166 enclose the THUMP domain; it reads EEIMKRISKV…SDAAYLYSRV (106 aa). ATP contacts are provided by residues 184–185, 209–210, R266, G288, and Q297; these read ML and HF.

It belongs to the ThiI family.

It is found in the cytoplasm. The enzyme catalyses [ThiI sulfur-carrier protein]-S-sulfanyl-L-cysteine + a uridine in tRNA + 2 reduced [2Fe-2S]-[ferredoxin] + ATP + H(+) = [ThiI sulfur-carrier protein]-L-cysteine + a 4-thiouridine in tRNA + 2 oxidized [2Fe-2S]-[ferredoxin] + AMP + diphosphate. It catalyses the reaction [ThiS sulfur-carrier protein]-C-terminal Gly-Gly-AMP + S-sulfanyl-L-cysteinyl-[cysteine desulfurase] + AH2 = [ThiS sulfur-carrier protein]-C-terminal-Gly-aminoethanethioate + L-cysteinyl-[cysteine desulfurase] + A + AMP + 2 H(+). The protein operates within cofactor biosynthesis; thiamine diphosphate biosynthesis. In terms of biological role, catalyzes the ATP-dependent transfer of a sulfur to tRNA to produce 4-thiouridine in position 8 of tRNAs, which functions as a near-UV photosensor. Also catalyzes the transfer of sulfur to the sulfur carrier protein ThiS, forming ThiS-thiocarboxylate. This is a step in the synthesis of thiazole, in the thiamine biosynthesis pathway. The sulfur is donated as persulfide by IscS. This chain is Probable tRNA sulfurtransferase, found in Macrococcus caseolyticus (strain JCSC5402) (Macrococcoides caseolyticum).